Consider the following 435-residue polypeptide: AP-2 complex subunit mu (435 aa).

Residue Ser-45 is modified to Phosphoserine. A Phosphothreonine modification is found at Thr-156. The region spanning 170–434 (RNELFLDVLE…IGRSGIYETR (265 aa)) is the MHD domain. 3 residues coordinate a 1,2-diacyl-sn-glycero-3-phospho-(1D-myo-inositol-3,4,5-trisphosphate): Lys-341, Lys-345, and Lys-354.

It belongs to the adaptor complexes medium subunit family. As to quaternary structure, adaptor protein complex 2 (AP-2) is a heterotetramer composed of two large adaptins (alpha-type subunit AP2A1 or AP2A2 and beta-type subunit AP2B1), a medium adaptin (mu-type subunit AP2M1) and a small adaptin (sigma-type subunit AP2S1). Interacts with ATP6V1H and MEGF10. Interacts with EGFR. Interacts with PIP5K1C; tyrosine phosphorylation of PIP5K1C weakens the interaction. Interacts with KIAA0319; required for clathrin-mediated endocytosis of KIAA0319. Interacts with DVL2 (via DEP domain). Interacts with KCNQ1; mediates estrogen-induced internalization via clathrin-coated vesicles. Together with AP2A1 or AP2A2 and AP2B1, it interacts with ADAM10; this interaction facilitates ADAM10 endocytosis from the plasma membrane during long-term potentiation in hippocampal neurons. Probably interacts with ACE2 (via endocytic sorting signal motif); the interaction is inhibited by ACE2 phosphorylation. Interacts with RALBP1; the interaction is direct. Interacts with TMEM106B (via N-terminus). In terms of processing, phosphorylation at Thr-156 increases the affinity of the AP-2 complex for cargo membrane proteins during the initial stages of endocytosis.

The protein localises to the cell membrane. Its subcellular location is the membrane. The protein resides in the coated pit. In terms of biological role, component of the adaptor protein complex 2 (AP-2). Adaptor protein complexes function in protein transport via transport vesicles in different membrane traffic pathways. Adaptor protein complexes are vesicle coat components and appear to be involved in cargo selection and vesicle formation. AP-2 is involved in clathrin-dependent endocytosis in which cargo proteins are incorporated into vesicles surrounded by clathrin (clathrin-coated vesicles, CCVs) which are destined for fusion with the early endosome. The clathrin lattice serves as a mechanical scaffold but is itself unable to bind directly to membrane components. Clathrin-associated adaptor protein (AP) complexes which can bind directly to both the clathrin lattice and to the lipid and protein components of membranes are considered to be the major clathrin adaptors contributing the CCV formation. AP-2 also serves as a cargo receptor to selectively sort the membrane proteins involved in receptor-mediated endocytosis. AP-2 seems to play a role in the recycling of synaptic vesicle membranes from the presynaptic surface. AP-2 recognizes Y-X-X-[FILMV] (Y-X-X-Phi) and [ED]-X-X-X-L-[LI] endocytosis signal motifs within the cytosolic tails of transmembrane cargo molecules. AP-2 may also play a role in maintaining normal post-endocytic trafficking through the ARF6-regulated, non-clathrin pathway. During long-term potentiation in hippocampal neurons, AP-2 is responsible for the endocytosis of ADAM10. The AP-2 mu subunit binds to transmembrane cargo proteins; it recognizes the Y-X-X-Phi motifs. The surface region interacting with to the Y-X-X-Phi motif is inaccessible in cytosolic AP-2, but becomes accessible through a conformational change following phosphorylation of AP-2 mu subunit at Thr-156 in membrane-associated AP-2. The membrane-specific phosphorylation event appears to involve assembled clathrin which activates the AP-2 mu kinase AAK1. Plays a role in endocytosis of frizzled family members upon Wnt signaling. The polypeptide is AP-2 complex subunit mu (AP2M1) (Pongo abelii (Sumatran orangutan)).